A 372-amino-acid chain; its full sequence is GTPase Obg (372 aa).

An Obg domain is found at 1 to 159; that stretch reads MAFVDEAKFF…KWLLIELKLM (159 aa). Positions 121–141 are disordered; that stretch reads GSGGMGNPHFSSGSNRTPRVA. Residues 160-329 enclose the OBG-type G domain; it reads ADVGLVGLPN…LVKLIGDIID (170 aa). GTP contacts are provided by residues 166 to 173, 191 to 195, 213 to 216, 280 to 283, and 310 to 312; these read GLPNAGKS, FTTLE, DIPG, NKCD, and SAI. Ser173 and Thr193 together coordinate Mg(2+). The tract at residues 346-372 is disordered; that stretch reads QDLKKQKEEERRQELKKQKEEEQAKDE.

This sequence belongs to the TRAFAC class OBG-HflX-like GTPase superfamily. OBG GTPase family. As to quaternary structure, monomer. Mg(2+) serves as cofactor.

The protein localises to the cytoplasm. In terms of biological role, an essential GTPase which binds GTP, GDP and possibly (p)ppGpp with moderate affinity, with high nucleotide exchange rates and a fairly low GTP hydrolysis rate. Plays a role in control of the cell cycle, stress response, ribosome biogenesis and in those bacteria that undergo differentiation, in morphogenesis control. The protein is GTPase Obg of Desulfotalea psychrophila (strain LSv54 / DSM 12343).